Consider the following 824-residue polypeptide: Translation initiation factor IF-2 (824 aa).

Disordered stretches follow at residues 1–32 and 45–232; these read MSDTDGKKTLGLRGGAPRPGNVKQSFSHGRTK and VPKA…MGGQ. Residues 45 to 57 show a composition bias toward low complexity; it reads VPKAGATTSAGGK. Positions 86–144 are enriched in basic and acidic residues; the sequence is KAREAEEEAARIAEEKARAEERERRRAEQEERERAEREREESLKAKAEEDKRRKDEAEA. Low complexity predominate over residues 145 to 167; it reads AAKAAAAPAAEPVVQRPAAKAAP. Residues 170–193 are compositionally biased toward basic and acidic residues; it reads APRKQQDRDRDNKRGGKGNDDSRR. The tr-type G domain maps to 321–489; that stretch reads TRPPVVTIMG…AIALQAEILE (169 aa). Positions 330–337 are G1; sequence GHVDHGKT. 330–337 contacts GTP; sequence GHVDHGKT. The tract at residues 355-359 is G2; that stretch reads GITQH. Residues 377–380 are G3; the sequence is DTPG. GTP is bound by residues 377–381 and 431–434; these read DTPGH and NKID. The interval 431–434 is G4; sequence NKID. A G5 region spans residues 467–469; that stretch reads SAI.

It belongs to the TRAFAC class translation factor GTPase superfamily. Classic translation factor GTPase family. IF-2 subfamily.

The protein resides in the cytoplasm. Its function is as follows. One of the essential components for the initiation of protein synthesis. Protects formylmethionyl-tRNA from spontaneous hydrolysis and promotes its binding to the 30S ribosomal subunits. Also involved in the hydrolysis of GTP during the formation of the 70S ribosomal complex. This is Translation initiation factor IF-2 from Roseobacter denitrificans (strain ATCC 33942 / OCh 114) (Erythrobacter sp. (strain OCh 114)).